The following is a 1399-amino-acid chain: MKDLLNLLKNQGQVEEFDAIRIGLASPEMIRSWSFGEVKKPETINYRTFKPERDGLFCAKIFGPVKDYECLCGKYKRLKHRGVICEKCGVEVALAKVRRERMAHIELASPVAHIWFLKSLPSRIGLLMDMTLRDIERVLYFESYVVIDPGMTTLEKGQLLNDEQYFEALEEFGDDFDARMGAEAVRELLHAIDLEHEIGRLREEIPQTNSETKIKKLSKRLKLMEAFQGSGNLPEWMVLTVLPVLPPDLRPLVPLDGGRFATSDLNDLYRRVINRNNRLKRLLDLSAPDIIVRNEKRMLQEAVDALLDNGRRGRAITGSNKRPLKSLADMIKGKQGRFRQNLLGKRVDYSGRSVITVGPTLRLHQCGLPKKMALELFKPFIFGKLEMRGLATTIKAAKKMVERELPEVWDVLAEVIREHPVLLNRAPTLHRLGIQAFEPVLIEGKAIQLHPLVCAAYNADFDGDQMAVHVPLTLEAQLEARALMMSTNNILSPANGEPIIVPSQDVVLGLYYMTREAINAKGEGRVFADLQEVDRVFRAGEAALHAKIKVRINETVNDRDGNSVNNTRIVDTTVGRALLFQVVPKGLSFDVVNLPMKKKAISKLINQCYRVVGLKETVIFADQLMYTGFAYSTISGVSIGVNDFVIPDEKARIIGAATDEVKEIESQYASGLVTQGEKYNKVIDLWSKANDEVSKAMMANLSKEKVIDRHGDEVEQESFNSMYMMADSGARGSAAQIRQLAGMRGLMAKPDGSIIETPITANFREGLSVLQYFISTHGARKGLADTALKTANSGYLTRRLVDVAQDLVVTEIDCGTEHGLLMTPHIEGGDVVEPLGERVLGRVIARDVFKPGTEDVIVPAGTLVDEKWVEFIELNSIDEVIVRSPISCETRYGICAKCYGRDLARGHQVNIGEAVGVIAAQSIGEPGTQLTMRTFHIGGAASRTSAADSVQVKNGGTVRLHNLKHVERVDGNLVAVSRSGELAIADDFGRERERYKLPYGAVISVKEGDKVDAGAIVAKWDPHTHPIVTEMKGTVTYVGMEEGITIKRQTDELTGMTNIEVLDAKDRPAAGKDIRPAVKMVDDNGKDLLLPGTDVIAQYFLPANALVGVADGAKIAIGDVIARIPQETSKTRDITGGLPRVADLFEARRPKEASILAEVSGTIAFGKETKGKRRLVITPNDGSDPYEELIPKWRHLNVFEGEQVNRGEVISDGPSDPHDILRLLGVSALAKYIVNEIQDVYRLQGVKINDKHIETILRQMLRKVEISESGDSSFIKGDQMELTHVLVENERLNAEDKFVSKFTRVLLGITKASLSTESFISAASFQETTRVLTEAAVTGKRDYLRGLKENVVVGRLIPAGTGLAYHSERKRRRDADKPLRVSASEVEAALTEALNSSGN.

Zn(2+) is bound by residues Cys-70, Cys-72, Cys-85, and Cys-88. Mg(2+) is bound by residues Asp-460, Asp-462, and Asp-464. Cys-814, Cys-888, Cys-895, and Cys-898 together coordinate Zn(2+).

This sequence belongs to the RNA polymerase beta' chain family. As to quaternary structure, the RNAP catalytic core consists of 2 alpha, 1 beta, 1 beta' and 1 omega subunit. When a sigma factor is associated with the core the holoenzyme is formed, which can initiate transcription. Mg(2+) serves as cofactor. Requires Zn(2+) as cofactor.

The catalysed reaction is RNA(n) + a ribonucleoside 5'-triphosphate = RNA(n+1) + diphosphate. DNA-dependent RNA polymerase catalyzes the transcription of DNA into RNA using the four ribonucleoside triphosphates as substrates. The protein is DNA-directed RNA polymerase subunit beta' of Pseudomonas fluorescens (strain Pf0-1).